A 166-amino-acid polypeptide reads, in one-letter code: Protein C (166 aa).

Residues 17–42 (YKRHTDDQASNNQVPKTGQEHGRTSC) form a disordered region.

Functionally, may counteract the cellular interferon antiviral system. The protein is Protein C (P/V/C) of Hendra virus (isolate Horse/Autralia/Hendra/1994).